The following is a 147-amino-acid chain: Large ribosomal subunit protein uL15 (147 aa).

Residues 1–57 (MDLSNLSPAPGSTKARKRLGRGPGSGNGTTAGRGNKGHNSRSGGGVRPGFEGGQMPL) form a disordered region. Gly residues-rich tracts occupy residues 21–31 (RGPGSGNGTTA) and 42–52 (SGGGVRPGFEG).

Belongs to the universal ribosomal protein uL15 family. In terms of assembly, part of the 50S ribosomal subunit.

Its function is as follows. Binds to the 23S rRNA. The sequence is that of Large ribosomal subunit protein uL15 from Desulfosudis oleivorans (strain DSM 6200 / JCM 39069 / Hxd3) (Desulfococcus oleovorans).